We begin with the raw amino-acid sequence, 592 residues long: MNGTTSSINFLTSDDDASAAAMEAFIGTNHHSSLFPPPPQQPPQPQFNEDTLQQRLQALIESAGENWTYAIFWQISHDFDSSTGDNTVILGWGDGYYKGEEDKEKKKNNTNTAEQEHRKRVIRELNSLISGGIGVSDESNDEEVTDTEWFFLVSMTQSFVNGVGLPGESFLNSRVIWLSGSGALTGSGCERAGQGQIYGLKTMVCIATQNGVVELGSSEVISQSSDLMHKVNNLFNFNNGGGNNGVEASSWGFNLNPDQGENDPALWISEPTNTGIESPARVNNGNNSNSNSKSDSHQISKLEKNDISSVENQNRQSSCLVEKDLTFQGGLLKSNETLSFCGNESSKKRTSVSKGSNNDEGMLSFSTVVRSAANDSDHSDLEASVVKEAIVVEPPEKKPRKRGRKPANGREEPLNHVEAERQRREKLNQRFYSLRAVVPNVSKMDKASLLGDAISYINELKSKLQQAESDKEEIQKKLDGMSKEGNNGKGCGSRAKERKSSNQDSTASSIEMEIDVKIIGWDVMIRVQCGKKDHPGARFMEALKELDLEVNHASLSVVNDLMIQQATVKMGSQFFNHDQLKVALMTKVGENY.

Positions 82–141 are JAZ-interaction domain; sequence STGDNTVILGWGDGYYKGEEDKEKKKNNTNTAEQEHRKRVIRELNSLISGGIGVSDESND. Disordered stretches follow at residues 261-313, 341-361, 393-422, and 465-508; these read ENDP…VENQ, CGNE…NDEG, EPPE…AERQ, and QQAE…STAS. Residues 278–293 are compositionally biased toward low complexity; that stretch reads SPARVNNGNNSNSNSK. Residues 294 to 306 show a composition bias toward basic and acidic residues; sequence SDSHQISKLEKND. Polar residues predominate over residues 352 to 361; it reads VSKGSNNDEG. Basic residues predominate over residues 398 to 407; the sequence is KPRKRGRKPA. Composition is skewed to basic and acidic residues over residues 408–422 and 468–482; these read NGRE…AERQ and ESDK…DGMS. One can recognise a bHLH domain in the interval 411–460; that stretch reads EEPLNHVEAERQRREKLNQRFYSLRAVVPNVSKMDKASLLGDAISYINEL.

In terms of assembly, homo- and heterodimer. Interacts with MYB28, MYB29, MYB34, MYB51, MYB76, MYB122, MYC2, MYC4, AFPH2/NINJA and the JAZ repressors TIFY10A/JAZ1, TIFY10B/JAZ2, TIFY6B/JAZ3, TIFY11A/JAZ5, TIFY11B/JAZ6, TIFY5B/JAZ7, TIFY5A/JAZ8, TIFY7/JAZ9, TIFY9/JAZ10, TIFY3A/JAZ11 and TIFY3B/JAZ12. As to expression, constitutively expressed in roots, stems, leaves, flowers, and seedlings.

Its subcellular location is the nucleus. Its function is as follows. Transcription factor involved in tryptophan, jasmonic acid (JA) and other stress-responsive gene regulation. With MYC2 and MYC4, controls additively subsets of JA-dependent responses. Can form complexes with all known glucosinolate-related MYBs to regulate glucosinolate biosynthesis. Binds to the G-box (5'-CACGTG-3') of promoters. Activates multiple TIFY/JAZ promoters. The chain is Transcription factor MYC3 (MYC3) from Arabidopsis thaliana (Mouse-ear cress).